A 375-amino-acid chain; its full sequence is Geranylgeranyl transferase type-1 subunit beta (375 aa).

Positions 1 to 33 (MSETAVSIDSDRSKSEEEDEEEYSPPVQSSPSA) are disordered. Ser2 is modified (N-acetylserine). PFTB repeat units lie at residues 157–199 (SKSL…YMLD), 206–247 (KESA…RLMG), 265–306 (PSLL…KLIG), and 313–354 (KMAL…SLLE). Geranylgeranyl diphosphate contacts are provided by residues 232–234 (HGG) and 285–288 (RTNK). 2 residues coordinate Zn(2+): Asp291 and Cys293. 294 to 297 (YAFW) is a binding site for geranylgeranyl diphosphate. His342 is a Zn(2+) binding site.

Belongs to the protein prenyltransferase subunit beta family. Heterodimer of an alpha and a beta subunit. Zn(2+) is required as a cofactor. The cofactor is Mg(2+). Expressed in roots, leaves, stems, flowers and siliques.

The catalysed reaction is geranylgeranyl diphosphate + L-cysteinyl-[protein] = S-geranylgeranyl-L-cysteinyl-[protein] + diphosphate. Functionally, catalyzes the transfer of a geranyl-geranyl moiety from geranyl-geranyl pyrophosphate to a cysteine at the fourth position from the C-terminus of proteins having the C-terminal sequence Cys-aliphatic-aliphatic-X (CaaX). Seems to exclusively prenylate CaaX substrates with leucine in the terminal position. The beta subunit is responsible for peptide-binding. May negatively regulate abscisic acid (ABA) signaling in guard cells and auxin-induced lateral root initiation. In terms of biological role, negatively regulates ABA signaling in guard cells. in negative regulation of auxin-induced lateral root initiation. This chain is Geranylgeranyl transferase type-1 subunit beta (GGB), found in Arabidopsis thaliana (Mouse-ear cress).